Here is a 204-residue protein sequence, read N- to C-terminus: Probable GTP-binding protein EngB (204 aa).

Positions 23–195 (TLPEIAFVGR…ASALMQLLAM (173 aa)) constitute an EngB-type G domain. GTP contacts are provided by residues 31–38 (GRSNVGKS), 58–62 (GRTRE), 76–79 (DLPG), 143–146 (TKID), and 174–176 (FSA). Mg(2+) is bound by residues serine 38 and threonine 60.

Belongs to the TRAFAC class TrmE-Era-EngA-EngB-Septin-like GTPase superfamily. EngB GTPase family. Mg(2+) serves as cofactor.

Necessary for normal cell division and for the maintenance of normal septation. This is Probable GTP-binding protein EngB from Gemmatimonas aurantiaca (strain DSM 14586 / JCM 11422 / NBRC 100505 / T-27).